Consider the following 162-residue polypeptide: Ribosomal RNA large subunit methyltransferase H (162 aa).

S-adenosyl-L-methionine contacts are provided by residues L78, G109, and L128–L133.

The protein belongs to the RNA methyltransferase RlmH family. Homodimer.

It localises to the cytoplasm. It catalyses the reaction pseudouridine(1915) in 23S rRNA + S-adenosyl-L-methionine = N(3)-methylpseudouridine(1915) in 23S rRNA + S-adenosyl-L-homocysteine + H(+). Functionally, specifically methylates the pseudouridine at position 1915 (m3Psi1915) in 23S rRNA. This is Ribosomal RNA large subunit methyltransferase H from Psychrobacter arcticus (strain DSM 17307 / VKM B-2377 / 273-4).